The chain runs to 338 residues: tRNA N6-adenosine threonylcarbamoyltransferase (338 aa).

His-114 and His-118 together coordinate Fe cation. Substrate-binding positions include 136–140 (LVSGG), Asp-169, Gly-182, Asp-186, and Asn-275. Asp-301 is a Fe cation binding site.

It belongs to the KAE1 / TsaD family. Fe(2+) serves as cofactor.

It is found in the cytoplasm. The enzyme catalyses L-threonylcarbamoyladenylate + adenosine(37) in tRNA = N(6)-L-threonylcarbamoyladenosine(37) in tRNA + AMP + H(+). Functionally, required for the formation of a threonylcarbamoyl group on adenosine at position 37 (t(6)A37) in tRNAs that read codons beginning with adenine. Is involved in the transfer of the threonylcarbamoyl moiety of threonylcarbamoyl-AMP (TC-AMP) to the N6 group of A37, together with TsaE and TsaB. TsaD likely plays a direct catalytic role in this reaction. The protein is tRNA N6-adenosine threonylcarbamoyltransferase of Streptococcus equi subsp. equi (strain 4047).